The following is a 121-amino-acid chain: Spindle and kinetochore-associated protein 2 (121 aa).

Ser-101 is subject to Phosphoserine.

The protein belongs to the SKA2 family. Component of the SKA1 complex, composed of SKA1, SKA2 and SKA3. Forms a heterodimer with SKA1; the heterodimer interacting with SKA3. The core SKA1 complex is composed of 2 SKA1-SKA2 heterodimers, each heterodimer interacting with a molecule of the SKA3 homodimer. The core SKA1 complex associates with microtubules and forms oligomeric assemblies. Interacts directly with SKA1. Binds directly to microtubules; but with a much lower affinity than SKA1. May interact with NR3C1; the relevance of such interaction remains unclear in vivo.

The protein resides in the cytoplasm. Its subcellular location is the cytoskeleton. It localises to the spindle. The protein localises to the chromosome. It is found in the centromere. The protein resides in the kinetochore. Its function is as follows. Component of the SKA1 complex, a microtubule-binding subcomplex of the outer kinetochore that is essential for proper chromosome segregation. Required for timely anaphase onset during mitosis, when chromosomes undergo bipolar attachment on spindle microtubules leading to silencing of the spindle checkpoint. The SKA1 complex is a direct component of the kinetochore-microtubule interface and directly associates with microtubules as oligomeric assemblies. The complex facilitates the processive movement of microspheres along a microtubule in a depolymerization-coupled manner. In the complex, it is required for SKA1 localization. Affinity for microtubules is synergistically enhanced in the presence of the ndc-80 complex and may allow the ndc-80 complex to track depolymerizing microtubules. The protein is Spindle and kinetochore-associated protein 2 (SKA2) of Homo sapiens (Human).